The chain runs to 49 residues: Large ribosomal subunit protein bL33B (49 aa).

This sequence belongs to the bacterial ribosomal protein bL33 family.

The protein is Large ribosomal subunit protein bL33B (rpmGB) of Bacillus licheniformis.